A 225-amino-acid polypeptide reads, in one-letter code: Ribonuclease 3 (225 aa).

The 123-residue stretch at 5–127 (IDKLERKLGY…IIGAIYLDSD (123 aa)) folds into the RNase III domain. E40 is a Mg(2+) binding site. Residue D44 is part of the active site. Residues D113 and E116 each contribute to the Mg(2+) site. E116 is a catalytic residue. One can recognise a DRBM domain in the interval 154–224 (DPKTRLQEFL…AETALEQLTN (71 aa)). The segment at 204–225 (GTSRRKAEQAAAETALEQLTNG) is disordered. Positions 212 to 225 (QAAAETALEQLTNG) are enriched in low complexity.

Belongs to the ribonuclease III family. As to quaternary structure, homodimer. Mg(2+) serves as cofactor.

It is found in the cytoplasm. It carries out the reaction Endonucleolytic cleavage to 5'-phosphomonoester.. Functionally, digests double-stranded RNA. Involved in the processing of primary rRNA transcript to yield the immediate precursors to the large and small rRNAs (23S and 16S). Processes some mRNAs, and tRNAs when they are encoded in the rRNA operon. Processes pre-crRNA and tracrRNA of type II CRISPR loci if present in the organism. This is Ribonuclease 3 from Vibrio parahaemolyticus serotype O3:K6 (strain RIMD 2210633).